A 196-amino-acid chain; its full sequence is uncharacterized protein (196 aa).

The segment covering 1–10 has biased composition (pro residues); sequence MPGMVPPHVP. Disordered regions lie at residues 1 to 118 and 176 to 196; these read MPGM…EGSG and TEQA…SAPG. The segment covering 25–45 has biased composition (low complexity); it reads PVAPQVPSPGGAPGQGPYPYS. Residues 54–69 are compositionally biased toward polar residues; sequence LDTSGKNLTEQNSYSN.

This is an uncharacterized protein from Homo sapiens (Human).